The chain runs to 390 residues: Aspartate carbamoyltransferase, chloroplastic (390 aa).

Residues Met1–Arg68 constitute a chloroplast transit peptide. Carbamoyl phosphate-binding residues include Arg136 and Thr137. UMP contacts are provided by Arg136 and Thr137. An L-aspartate-binding site is contributed by Lys166. Positions 187, 215, and 218 each coordinate carbamoyl phosphate. Residues Arg187 and His215 each contribute to the UMP site. Positions 248 and 310 each coordinate UMP. Positions 248 and 310 each coordinate L-aspartate. Carbamoyl phosphate contacts are provided by Leu350 and Pro351.

Belongs to the aspartate/ornithine carbamoyltransferase superfamily. ATCase family. In terms of assembly, homotrimer.

It is found in the plastid. The protein resides in the chloroplast. It catalyses the reaction carbamoyl phosphate + L-aspartate = N-carbamoyl-L-aspartate + phosphate + H(+). The protein operates within pyrimidine metabolism; UMP biosynthesis via de novo pathway; (S)-dihydroorotate from bicarbonate: step 2/3. With respect to regulation, feedback inhibited by UMP. Functionally, catalyzes the condensation of carbamoyl phosphate and aspartate to form carbamoyl aspartate and inorganic phosphate, the committed step in the de novo pyrimidine nucleotide biosynthesis pathway. This is Aspartate carbamoyltransferase, chloroplastic (PYRB) from Arabidopsis thaliana (Mouse-ear cress).